A 457-amino-acid polypeptide reads, in one-letter code: 5' exonuclease Apollo (457 aa).

The TBM motif lies at 425 to 437 (ELPKQYLLTPLNA).

Belongs to the DNA repair metallo-beta-lactamase (DRMBL) family. Interacts with TERF2; the interaction is direct.

It is found in the chromosome. It localises to the telomere. The protein localises to the nucleus. The catalysed reaction is a beta-lactam + H2O = a substituted beta-amino acid. In terms of biological role, 5'-3' exonuclease that plays a central role in telomere maintenance and protection during S-phase. Participates in the protection of telomeres against non-homologous end-joining (NHEJ)-mediated repair, thereby ensuring that telomeres do not fuse. Plays a key role in telomeric loop (T loop) formation by being recruited by TERF2 at the leading end telomeres and by processing leading-end telomeres immediately after their replication via its exonuclease activity: generates 3' single-stranded overhang at the leading end telomeres avoiding blunt leading-end telomeres that are vulnerable to end-joining reactions and expose the telomere end in a manner that activates the DNA repair pathways. May be required for DNA interstrand cross-link repair. Possesses beta-lactamase activity, catalyzing the hydrolysis of penicillin G and nitrocefin. Exhibits no activity towards other beta-lactam antibiotic classes including cephalosporins (cefotaxime) and carbapenems (imipenem). This Gallus gallus (Chicken) protein is 5' exonuclease Apollo (DCLRE1B).